The chain runs to 217 residues: MOB kinase activator-like 2 (217 aa).

Residues 15 to 38 (GKESIRGNYKPKKHPRGSSRHTMR) form a disordered region. The span at 23–38 (YKPKKHPRGSSRHTMR) shows a compositional bias: basic residues. Zn(2+) is bound by residues Cys-89, Cys-94, His-167, and His-172.

The protein belongs to the MOB1/phocein family.

The chain is MOB kinase activator-like 2 (mob2) from Dictyostelium discoideum (Social amoeba).